The chain runs to 363 residues: Protein RecA (363 aa).

ATP is bound at residue 79 to 86; that stretch reads GPESSGKT.

This sequence belongs to the RecA family.

Its subcellular location is the cytoplasm. In terms of biological role, can catalyze the hydrolysis of ATP in the presence of single-stranded DNA, the ATP-dependent uptake of single-stranded DNA by duplex DNA, and the ATP-dependent hybridization of homologous single-stranded DNAs. It interacts with LexA causing its activation and leading to its autocatalytic cleavage. In Methylobacterium radiotolerans (strain ATCC 27329 / DSM 1819 / JCM 2831 / NBRC 15690 / NCIMB 10815 / 0-1), this protein is Protein RecA.